A 461-amino-acid chain; its full sequence is ATP synthase subunit beta (461 aa).

151 to 158 is a binding site for ATP; that stretch reads GGAGVGKT.

This sequence belongs to the ATPase alpha/beta chains family. F-type ATPases have 2 components, CF(1) - the catalytic core - and CF(0) - the membrane proton channel. CF(1) has five subunits: alpha(3), beta(3), gamma(1), delta(1), epsilon(1). CF(0) has three main subunits: a(1), b(2) and c(9-12). The alpha and beta chains form an alternating ring which encloses part of the gamma chain. CF(1) is attached to CF(0) by a central stalk formed by the gamma and epsilon chains, while a peripheral stalk is formed by the delta and b chains.

The protein resides in the cell inner membrane. The enzyme catalyses ATP + H2O + 4 H(+)(in) = ADP + phosphate + 5 H(+)(out). Produces ATP from ADP in the presence of a proton gradient across the membrane. The catalytic sites are hosted primarily by the beta subunits. The sequence is that of ATP synthase subunit beta from Coxiella burnetii (strain Dugway 5J108-111).